Consider the following 1345-residue polypeptide: MVYSYSEKKRIRKDFGKRPQVLDIPYLLSIQLDSFKKFTDQDPTGERGLEAAFRSVFPIKSFSGNSELQYVSYKLGEPVFDVKECQIRGVTYSAPLRVKLRMVLYDREAAAGTVKDIKEQEVYMGDIPLMTDNGTFVINGTERVIVSQLHRSPGVFFDHDRGKTHSSGKVLYNARIIPYRGSWLDFEFDPKDALFVRIDRRRKLPATIILRALEYSTQEILDLFFERVEFKIKKDTLVMTLVPERLRGETASYDIKDAEGTVLVEAGRRVTARHIRQLEKTNTTELEVPVEYIVGKYAAQDYIDPDTGEVLVSANSEISLEDLAKLSLAGIKELSTLYINELDHGAYISDTLRIDPTTNRLEALVEIYRMMRPGEPPTKDAAEALFQNLFFSEERYDLSKVGRMKFNRRLSIPDDEGSGVLSKEDIVAVMKNIIHIRNGFDEVDDIDHLGNRRIRSVGEMAENQFRVGLVRVERAVRERLSLGDLNELMPQDLINAKPISAAVKEFFGSSQLSQFMDQNNPLSEVTHKRRISALGPGGLTRERAGFEVRDVHPTHYGRLCPIETPEGPNIGLINSLASFARTNSYGFLETPYRKVVDGVITDDVEYLSAIEEGRYVIAQANIEVDSEGRMVEEQIACRHKGESTFMRASDIQYMDVSPQQIISVAASLIPFLEHDDANRALMGANMQRQAVPTLKSEKPLVGTGIERTLAVDSGVVVAAKRGGVIDYVDASRIVVKVNEDELRPGEAGIDIYNLTKYTRSNQNTCINQRPCCSVGEPVVRGDVLADGPSTDLGDLALGQNMRIAFMPWNGYNFEDSILISERVAQEDRFTTIHIQELSCIARDTKLGSEEITADIPNVGESALSKLDESGIVYIGAEVKGGDILVGKVTPKGETQLTPEEKLLRAIFGEKASDVKDSSLRVPNSVKGTIIDVQVFTRDGVEKDKRAIEIEEMHIAQARKDLGEEFKILEEGVLSRARNLLLSAGFTEAQIAALPRKDVLVQVIDDETKQTELEQLAEQHEELKADFDKKFEIKRRKITQGDDLAPGVLKIVKVYLAVKRTIQPGDKMAGRHGNKGVISKINPIEDMPYDEQGNPVDIVLNPLGVPSRMNIGQVLEVHLGAAAKGIGNKIAAMLEDQREKGLAEVRNYIKQVYELGDEVQQRVDIDSFTDDELLRLANNLKGGIPVATPAFDGAKEKEIKQMLELAGLPTSGQLKLFDGRTGNEFERPVTVGYMYMLKLNHLVDDKMHARSTGSYSLVTQQPLGGKAQFGGQRFGEMEVWALEAYGAAYTLQEMLTVKSDDVNGRTQMYKNIVDGNHQMQPGMPESFNVLLKEIRSLGINIELDQE.

Belongs to the RNA polymerase beta chain family. In terms of assembly, the RNAP catalytic core consists of 2 alpha, 1 beta, 1 beta' and 1 omega subunit. When a sigma factor is associated with the core the holoenzyme is formed, which can initiate transcription.

The catalysed reaction is RNA(n) + a ribonucleoside 5'-triphosphate = RNA(n+1) + diphosphate. In terms of biological role, DNA-dependent RNA polymerase catalyzes the transcription of DNA into RNA using the four ribonucleoside triphosphates as substrates. The protein is DNA-directed RNA polymerase subunit beta of Shewanella sp. (strain ANA-3).